Reading from the N-terminus, the 503-residue chain is ATP synthase subunit alpha (503 aa).

An ATP-binding site is contributed by 169 to 176 (GDRQTGKT).

This sequence belongs to the ATPase alpha/beta chains family. As to quaternary structure, F-type ATPases have 2 components, CF(1) - the catalytic core - and CF(0) - the membrane proton channel. CF(1) has five subunits: alpha(3), beta(3), gamma(1), delta(1), epsilon(1). CF(0) has three main subunits: a(1), b(2) and c(9-12). The alpha and beta chains form an alternating ring which encloses part of the gamma chain. CF(1) is attached to CF(0) by a central stalk formed by the gamma and epsilon chains, while a peripheral stalk is formed by the delta and b chains.

Its subcellular location is the cell membrane. It catalyses the reaction ATP + H2O + 4 H(+)(in) = ADP + phosphate + 5 H(+)(out). Functionally, produces ATP from ADP in the presence of a proton gradient across the membrane. The alpha chain is a regulatory subunit. The polypeptide is ATP synthase subunit alpha (Macrococcus caseolyticus (strain JCSC5402) (Macrococcoides caseolyticum)).